The following is a 155-amino-acid chain: 6,7-dimethyl-8-ribityllumazine synthase (155 aa).

Residues phenylalanine 22, 56-58, and 80-82 each bind 5-amino-6-(D-ribitylamino)uracil; these read AFE and AVI. Residue 85-86 participates in (2S)-2-hydroxy-3-oxobutyl phosphate binding; sequence ST. Histidine 88 serves as the catalytic Proton donor. Phenylalanine 113 contributes to the 5-amino-6-(D-ribitylamino)uracil binding site. Residue arginine 127 coordinates (2S)-2-hydroxy-3-oxobutyl phosphate.

The protein belongs to the DMRL synthase family.

The catalysed reaction is (2S)-2-hydroxy-3-oxobutyl phosphate + 5-amino-6-(D-ribitylamino)uracil = 6,7-dimethyl-8-(1-D-ribityl)lumazine + phosphate + 2 H2O + H(+). Its pathway is cofactor biosynthesis; riboflavin biosynthesis; riboflavin from 2-hydroxy-3-oxobutyl phosphate and 5-amino-6-(D-ribitylamino)uracil: step 1/2. Its function is as follows. Catalyzes the formation of 6,7-dimethyl-8-ribityllumazine by condensation of 5-amino-6-(D-ribitylamino)uracil with 3,4-dihydroxy-2-butanone 4-phosphate. This is the penultimate step in the biosynthesis of riboflavin. In Caldicellulosiruptor bescii (strain ATCC BAA-1888 / DSM 6725 / KCTC 15123 / Z-1320) (Anaerocellum thermophilum), this protein is 6,7-dimethyl-8-ribityllumazine synthase.